Consider the following 217-residue polypeptide: Octanoyltransferase (217 aa).

The BPL/LPL catalytic domain maps to 32–207 (SESPDELWIV…TFSQLLGYQH (176 aa)). Residues 71–78 (RGGQVTYH), 138–140 (SLG), and 151–153 (GLA) each bind substrate. The Acyl-thioester intermediate role is filled by cysteine 169.

The protein belongs to the LipB family.

The protein localises to the cytoplasm. It carries out the reaction octanoyl-[ACP] + L-lysyl-[protein] = N(6)-octanoyl-L-lysyl-[protein] + holo-[ACP] + H(+). It participates in protein modification; protein lipoylation via endogenous pathway; protein N(6)-(lipoyl)lysine from octanoyl-[acyl-carrier-protein]: step 1/2. Functionally, catalyzes the transfer of endogenously produced octanoic acid from octanoyl-acyl-carrier-protein onto the lipoyl domains of lipoate-dependent enzymes. Lipoyl-ACP can also act as a substrate although octanoyl-ACP is likely to be the physiological substrate. This is Octanoyltransferase from Shewanella sp. (strain W3-18-1).